We begin with the raw amino-acid sequence, 1296 residues long: DNA-directed RNA polymerase subunit beta' (1296 aa).

Zn(2+)-binding residues include Cys-60, Cys-62, Cys-75, and Cys-78. A disordered region spans residues 188-209 (GAKGDARRKVRESAEREMRQIR). Mg(2+) contacts are provided by Asp-535, Asp-537, and Asp-539. Zn(2+) is bound by residues Cys-877, Cys-954, Cys-961, and Cys-964.

Belongs to the RNA polymerase beta' chain family. As to quaternary structure, the RNAP catalytic core consists of 2 alpha, 1 beta, 1 beta' and 1 omega subunit. When a sigma factor is associated with the core the holoenzyme is formed, which can initiate transcription. Requires Mg(2+) as cofactor. Zn(2+) serves as cofactor.

The catalysed reaction is RNA(n) + a ribonucleoside 5'-triphosphate = RNA(n+1) + diphosphate. Its function is as follows. DNA-dependent RNA polymerase catalyzes the transcription of DNA into RNA using the four ribonucleoside triphosphates as substrates. This is DNA-directed RNA polymerase subunit beta' from Parafrankia sp. (strain EAN1pec).